We begin with the raw amino-acid sequence, 417 residues long: MSLSNKLSIRDLNLKDKRVLIRVDFNVPMKDGAITNNNRIVQALPTVKYALDNGASAVILMSHLGRPNGEAVAKYSLKPVAAEVEKLLGKPVEFLNDCVGPDVEKACQSAKDGKVILLENLRFHIEEEGSAKVDGQKVKADAEAIKKFRASLTTLADIYINDAFGTAHRAHSSMVGVDLSQRAAGFLMQKELEYFAKALENPSRPFLAILGGAKVSDKIQLIENMLDKVNALIICGGMAFTFKKTLDNVKIGKSLFDEPGSKLVQNLVKKAAEKNVKIVFPVDFITADKFAPDASTGYATDDDGIPDGWQGLDCGERSNKLFREEILKSKTIVWNGPSGVFEFDAFSSGTKAVLDAVINATKEGATTIIIGGGDTATAALKWGAEGQVSHISTGGGASLELLEGKELPGVTALSSKN.

Positions 23, 24, 25, 26, 38, 39, 62, 63, 65, 66, 121, 122, 168, and 169 each coordinate (2R)-3-phosphoglycerate. Gly212 contributes to the ADP binding site. Gly212 serves as a coordination point for CDP. AMP is bound by residues Ala213 and Lys214. Ala213 lines the ATP pocket. Ala213 contributes to the Mg(2+) binding site. Asp217 provides a ligand contact to CDP. Asp217 is a Mg(2+) binding site. Position 218 (Lys218) interacts with AMP. Lys218 serves as a coordination point for ATP. Gly236 is a binding site for ADP. CDP is bound at residue Gly236. The AMP site is built by Gly237 and Gly311. Gly237 and Gly311 together coordinate ATP. Residues Gly336 and Phe341 each contribute to the CDP site. Phe341 provides a ligand contact to ADP. AMP is bound at residue Glu342. Residues Glu342, Asp374, and Thr375 each contribute to the ATP site. Asp374 is a binding site for Mg(2+).

It belongs to the phosphoglycerate kinase family. In terms of assembly, monomer. The cofactor is Mg(2+).

Its subcellular location is the cytoplasm. The protein localises to the mitochondrion. It carries out the reaction (2R)-3-phosphoglycerate + ATP = (2R)-3-phospho-glyceroyl phosphate + ADP. Its pathway is carbohydrate degradation; glycolysis; pyruvate from D-glyceraldehyde 3-phosphate: step 2/5. Its function is as follows. Catalyzes one of the two ATP producing reactions in the glycolytic pathway via the reversible conversion of 1,3-diphosphoglycerate to 3-phosphoglycerate. Both L- and D- forms of purine and pyrimidine nucleotides can be used as substrates, but the activity is much lower on pyrimidines. Negatively regulates the biosynthesis of acetyl-CoA from pyruvate in the mitochondrion. The protein is Phosphoglycerate kinase 1 (PGK1) of Rhizopus niveus.